A 494-amino-acid polypeptide reads, in one-letter code: UDP-N-acetylmuramate--L-alanine ligase (494 aa).

122-128 (GTHGKTT) is a binding site for ATP.

Belongs to the MurCDEF family.

Its subcellular location is the cytoplasm. The catalysed reaction is UDP-N-acetyl-alpha-D-muramate + L-alanine + ATP = UDP-N-acetyl-alpha-D-muramoyl-L-alanine + ADP + phosphate + H(+). Its pathway is cell wall biogenesis; peptidoglycan biosynthesis. Functionally, cell wall formation. The polypeptide is UDP-N-acetylmuramate--L-alanine ligase (Mycobacterium bovis (strain ATCC BAA-935 / AF2122/97)).